Reading from the N-terminus, the 392-residue chain is Bifunctional enzyme Fae/Hps (392 aa).

Positions 1–161 (MFLVGEALIG…YEKERSVHPV (161 aa)) are formaldehyde-activating enzyme. Histidine 17 (proton donor) is an active-site residue. 5 residues coordinate substrate: aspartate 19, leucine 48, lysine 66, threonine 68, and glutamine 83. The tract at residues 162–392 (MGYRVMRLWD…IDQYRIMTDF (231 aa)) is 3-hexulose-6-phosphate synthase.

This sequence in the N-terminal section; belongs to the formaldehyde-activating enzyme family. In the C-terminal section; belongs to the HPS/KGPDC family. HPS subfamily.

The catalysed reaction is 5,6,7,8-tetrahydromethanopterin + formaldehyde = 5,10-methylenetetrahydromethanopterin + H2O. The enzyme catalyses D-ribulose 5-phosphate + formaldehyde = D-arabino-hex-3-ulose 6-phosphate. Its pathway is carbohydrate biosynthesis; D-ribose 5-phosphate biosynthesis. Its function is as follows. Catalyzes the condensation of formaldehyde with tetrahydromethanopterin (H(4)MPT) to 5,10-methylenetetrahydromethanopterin. Functionally, catalyzes the reversible formation of ribulose-5-phosphate and formaldehyde from 3-hexulose-6-phosphate. This Methanothrix thermoacetophila (strain DSM 6194 / JCM 14653 / NBRC 101360 / PT) (Methanosaeta thermophila) protein is Bifunctional enzyme Fae/Hps.